The chain runs to 456 residues: uncharacterized protein (456 aa).

In terms of domain architecture, TRAM spans Leu-5–Ser-63. [4Fe-4S] cluster contacts are provided by Cys-76, Cys-82, Cys-85, and Cys-165. S-adenosyl-L-methionine is bound by residues Gln-289, Tyr-318, Asp-339, and Asp-387. The Nucleophile role is filled by Cys-414.

Belongs to the class I-like SAM-binding methyltransferase superfamily. RNA M5U methyltransferase family.

This is an uncharacterized protein from Enterococcus faecalis (strain ATCC 700802 / V583).